A 216-amino-acid chain; its full sequence is Ribonuclease HII (216 aa).

The 184-residue stretch at 33–216 (WPVAGADEAG…RMSFRPFRQL (184 aa)) folds into the RNase H type-2 domain. Aspartate 39, glutamate 40, and aspartate 130 together coordinate a divalent metal cation.

It belongs to the RNase HII family. The cofactor is Mn(2+). Mg(2+) serves as cofactor.

The protein localises to the cytoplasm. It catalyses the reaction Endonucleolytic cleavage to 5'-phosphomonoester.. Endonuclease that specifically degrades the RNA of RNA-DNA hybrids. The polypeptide is Ribonuclease HII (Sinorhizobium medicae (strain WSM419) (Ensifer medicae)).